The primary structure comprises 147 residues: MSSSRVGLRLAACLLNVSEAGRKYIVENIAKAALLDKNGKKHPQVSVLNIFSDQDYKRSVITIATSVDKLGLAEDLVLHVPGCSVFLFGEADLPEKRSLVQRRKQLGWFTRRDFSALQPDLGAAPSQRCGLTGSEHGFCFALFFFFF.

The signal sequence occupies residues Met1–Ala20.

It belongs to the formiminotransferase family. In terms of tissue distribution, widely expressed with highest levels in liver and skeletal muscle, and moderate levels in kidney, bone and pancreas.

This Homo sapiens (Human) protein is Formiminotransferase N-terminal subdomain-containing protein (FTCDNL1).